Consider the following 206-residue polypeptide: uncharacterized protein (206 aa).

A MurNAc-LAA domain is found at 32–201 (VYIDAGHGGE…AADAIVNGID (170 aa)).

Belongs to the N-acetylmuramoyl-L-alanine amidase 3 family.

This is an uncharacterized protein from Bacillus subtilis (strain 168).